Here is a 718-residue protein sequence, read N- to C-terminus: Polyribonucleotide nucleotidyltransferase (718 aa).

Residues Asp-491 and Asp-497 each coordinate Mg(2+). Residues 558-617 form the KH domain; sequence PRMLTIKINPEKIRDVIGKGGATIRALTEETGTQIDISDDGTIVIASVDEGQAKEAQRRI. Positions 627 to 695 constitute an S1 motif domain; that stretch reads GQVYDGSVLR…EKGRLRLSVK (69 aa).

This sequence belongs to the polyribonucleotide nucleotidyltransferase family. The cofactor is Mg(2+).

Its subcellular location is the cytoplasm. It carries out the reaction RNA(n+1) + phosphate = RNA(n) + a ribonucleoside 5'-diphosphate. In terms of biological role, involved in mRNA degradation. Catalyzes the phosphorolysis of single-stranded polyribonucleotides processively in the 3'- to 5'-direction. This Bordetella avium (strain 197N) protein is Polyribonucleotide nucleotidyltransferase.